Consider the following 504-residue polypeptide: Chromosomal replication initiator protein DnaA (504 aa).

Residues Met-1–Asp-109 form a domain I, interacts with DnaA modulators region. A disordered region spans residues Ala-98–Ala-162. The span at Asp-109–Ala-125 shows a compositional bias: low complexity. Residues Ser-110–Val-163 are domain II. The interval Asn-164–Ala-380 is domain III, AAA+ region. The ATP site is built by Gly-208, Gly-210, Lys-211, and Thr-212. The tract at residues Ser-381–Arg-504 is domain IV, binds dsDNA.

This sequence belongs to the DnaA family. Oligomerizes as a right-handed, spiral filament on DNA at oriC.

It is found in the cytoplasm. Functionally, plays an essential role in the initiation and regulation of chromosomal replication. ATP-DnaA binds to the origin of replication (oriC) to initiate formation of the DNA replication initiation complex once per cell cycle. Binds the DnaA box (a 9 base pair repeat at the origin) and separates the double-stranded (ds)DNA. Forms a right-handed helical filament on oriC DNA; dsDNA binds to the exterior of the filament while single-stranded (ss)DNA is stabiized in the filament's interior. The ATP-DnaA-oriC complex binds and stabilizes one strand of the AT-rich DNA unwinding element (DUE), permitting loading of DNA polymerase. After initiation quickly degrades to an ADP-DnaA complex that is not apt for DNA replication. Binds acidic phospholipids. The probable consensus sequence for the DnaA box of this bacterium is 5'-TT(G/C)TCCACA-3'. The sequence is that of Chromosomal replication initiator protein DnaA from Mycolicibacterium smegmatis (strain ATCC 700084 / mc(2)155) (Mycobacterium smegmatis).